A 376-amino-acid chain; its full sequence is Protein-glutamate methylesterase/protein-glutamine glutaminase 1 (376 aa).

Residues lysine 4 to leucine 121 enclose the Response regulatory domain. Aspartate 55 bears the 4-aspartylphosphate mark. A disordered region spans residues arginine 138–alanine 169. The segment covering alanine 141 to threonine 158 has biased composition (polar residues). The region spanning serine 183–alanine 376 is the CheB-type methylesterase domain. Catalysis depends on residues serine 195, histidine 222, and aspartate 318.

It belongs to the CheB family. In terms of processing, phosphorylated by CheA. Phosphorylation of the N-terminal regulatory domain activates the methylesterase activity.

The protein resides in the cytoplasm. The catalysed reaction is [protein]-L-glutamate 5-O-methyl ester + H2O = L-glutamyl-[protein] + methanol + H(+). The enzyme catalyses L-glutaminyl-[protein] + H2O = L-glutamyl-[protein] + NH4(+). Its function is as follows. Involved in chemotaxis. Part of a chemotaxis signal transduction system that modulates chemotaxis in response to various stimuli. Catalyzes the demethylation of specific methylglutamate residues introduced into the chemoreceptors (methyl-accepting chemotaxis proteins or MCP) by CheR. Also mediates the irreversible deamidation of specific glutamine residues to glutamic acid. The chain is Protein-glutamate methylesterase/protein-glutamine glutaminase 1 from Vibrio vulnificus (strain YJ016).